Consider the following 352-residue polypeptide: Keratocan (352 aa).

Positions 1 to 20 (MASTICFILWVVFVTDTVWT) are cleaved as a signal peptide. The 39-residue stretch at 33–71 (EDWTMHDFDCPRECFCPPSFPTALYCENRGLKEIPAIPS) folds into the LRRNT domain. 2 disulfide bridges follow: Cys-42/Cys-48 and Cys-46/Cys-58. LRR repeat units lie at residues 72-93 (RIWYLYLENNLIETIPEKPFEN), 96-117 (QLRWINLNKNKITNYGIEKGAL), 122-142 (KLLFLFLEDNELEEVPSPLPR), 143-164 (SLEQLQLARNKVSRIPQGTFSN), 167-180 (NLTLLDLQHNKLLD), 193-214 (NLMQLNMAKNALRNMPPRLPAN), 215-235 (TMQVFLDNNSIEGIPENYFNV), and 238-258 (KVAFLRLNHNKLSDAGLPSSG). Residue Asn-93 is glycosylated (N-linked (GlcNAc...) (keratan sulfate) asparagine). Asn-167 carries an N-linked (GlcNAc...) (keratan sulfate) asparagine glycan. N-linked (GlcNAc...) asparagine glycosylation is present at Asn-222. Residue Asn-260 is glycosylated (N-linked (GlcNAc...) (keratan sulfate) asparagine). LRR repeat units follow at residues 263 to 282 (SILDLQLSHNQLTKVPKISA) and 283 to 304 (HLQHLHLDHNKIRNVNVSVICP). N-linked (GlcNAc...) asparagine glycosylation is present at Asn-298. Cys-303 and Cys-343 are oxidised to a cystine.

It belongs to the small leucine-rich proteoglycan (SLRP) family. SLRP class II subfamily. Post-translationally, binds three long, highly sulfated keratan sulfate chains in the cornea but short, non-sulfated poly(N-acetyllactosamine) chains in other tissues. The N-terminus is blocked. As to expression, abundant in cornea and sclera but also found in other tissues.

Its subcellular location is the secreted. The protein localises to the extracellular space. It is found in the extracellular matrix. Functionally, may be important in developing and maintaining corneal transparency and for the structure of the stromal matrix. This chain is Keratocan (KERA), found in Bos taurus (Bovine).